The following is a 309-amino-acid chain: Protein FdhE homolog (309 aa).

It belongs to the FdhE family.

It localises to the cytoplasm. Its function is as follows. Necessary for formate dehydrogenase activity. This chain is Protein FdhE homolog, found in Yersinia enterocolitica serotype O:8 / biotype 1B (strain NCTC 13174 / 8081).